The following is a 313-amino-acid chain: 4-diphosphocytidyl-2-C-methyl-D-erythritol kinase (313 aa).

K27 is an active-site residue. An ATP-binding site is contributed by P110–S120. Residue D152 is part of the active site.

It belongs to the GHMP kinase family. IspE subfamily.

It carries out the reaction 4-CDP-2-C-methyl-D-erythritol + ATP = 4-CDP-2-C-methyl-D-erythritol 2-phosphate + ADP + H(+). It functions in the pathway isoprenoid biosynthesis; isopentenyl diphosphate biosynthesis via DXP pathway; isopentenyl diphosphate from 1-deoxy-D-xylulose 5-phosphate: step 3/6. Catalyzes the phosphorylation of the position 2 hydroxy group of 4-diphosphocytidyl-2C-methyl-D-erythritol. The sequence is that of 4-diphosphocytidyl-2-C-methyl-D-erythritol kinase from Histophilus somni (strain 2336) (Haemophilus somnus).